The chain runs to 397 residues: Cytochrome b (397 aa).

4 helical membrane passes run 48–68, 92–113, 128–148, and 193–213; these read FGSMLGLCLVIQLLSGLLLSA, WMLRNIHANGSSMFFICIYAHI, WYFGVHLFLLTMAEAFLGYTL, and FYTLHFLLPFVMVAVVFLHLF. The heme b site is built by H98 and H112. Heme b contacts are provided by H197 and H211. H216 contacts a ubiquinone. 4 helical membrane passes run 241 to 261, 303 to 323, 335 to 355, and 362 to 382; these read IKDLFGYVCFSFFFMYLVCVD, AGGVYVMFLSIVVLYLIPTLH, LNQVVFWVLVGSFISLTWIGA, and YIILGSAFQLFISLVYCWTPF.

The protein belongs to the cytochrome b family. As to quaternary structure, the main subunits of complex b-c1 are: cytochrome b, cytochrome c1 and the Rieske protein. Heme b serves as cofactor.

Its subcellular location is the mitochondrion inner membrane. Functionally, component of the ubiquinol-cytochrome c reductase complex (complex III or cytochrome b-c1 complex) that is part of the mitochondrial respiratory chain. The b-c1 complex mediates electron transfer from ubiquinol to cytochrome c. Contributes to the generation of a proton gradient across the mitochondrial membrane that is then used for ATP synthesis. In Mytilus edulis (Blue mussel), this protein is Cytochrome b (MT-CYB).